The following is a 222-amino-acid chain: Phosphoribosylformylglycinamidine synthase subunit PurQ (222 aa).

Positions 3-222 (AAVVVFPGSN…RALSGLLTDA (220 aa)) constitute a Glutamine amidotransferase type-1 domain. Cys86 functions as the Nucleophile in the catalytic mechanism. Catalysis depends on residues His194 and Glu196.

As to quaternary structure, part of the FGAM synthase complex composed of 1 PurL, 1 PurQ and 2 PurS subunits.

It is found in the cytoplasm. It catalyses the reaction N(2)-formyl-N(1)-(5-phospho-beta-D-ribosyl)glycinamide + L-glutamine + ATP + H2O = 2-formamido-N(1)-(5-O-phospho-beta-D-ribosyl)acetamidine + L-glutamate + ADP + phosphate + H(+). It carries out the reaction L-glutamine + H2O = L-glutamate + NH4(+). The protein operates within purine metabolism; IMP biosynthesis via de novo pathway; 5-amino-1-(5-phospho-D-ribosyl)imidazole from N(2)-formyl-N(1)-(5-phospho-D-ribosyl)glycinamide: step 1/2. In terms of biological role, part of the phosphoribosylformylglycinamidine synthase complex involved in the purines biosynthetic pathway. Catalyzes the ATP-dependent conversion of formylglycinamide ribonucleotide (FGAR) and glutamine to yield formylglycinamidine ribonucleotide (FGAM) and glutamate. The FGAM synthase complex is composed of three subunits. PurQ produces an ammonia molecule by converting glutamine to glutamate. PurL transfers the ammonia molecule to FGAR to form FGAM in an ATP-dependent manner. PurS interacts with PurQ and PurL and is thought to assist in the transfer of the ammonia molecule from PurQ to PurL. The chain is Phosphoribosylformylglycinamidine synthase subunit PurQ from Ruegeria sp. (strain TM1040) (Silicibacter sp.).